A 414-amino-acid chain; its full sequence is CCA-adding enzyme (414 aa).

Gly-8 and Arg-11 together coordinate ATP. CTP-binding residues include Gly-8 and Arg-11. Mg(2+)-binding residues include Asp-21 and Asp-23. Positions 91, 137, and 140 each coordinate ATP. CTP is bound by residues Arg-91, Arg-137, and Arg-140.

This sequence belongs to the tRNA nucleotidyltransferase/poly(A) polymerase family. Bacterial CCA-adding enzyme type 2 subfamily. It depends on Mg(2+) as a cofactor.

It catalyses the reaction a tRNA precursor + 2 CTP + ATP = a tRNA with a 3' CCA end + 3 diphosphate. The enzyme catalyses a tRNA with a 3' CCA end + 2 CTP + ATP = a tRNA with a 3' CCACCA end + 3 diphosphate. In terms of biological role, catalyzes the addition and repair of the essential 3'-terminal CCA sequence in tRNAs without using a nucleic acid template. Adds these three nucleotides in the order of C, C, and A to the tRNA nucleotide-73, using CTP and ATP as substrates and producing inorganic pyrophosphate. tRNA 3'-terminal CCA addition is required both for tRNA processing and repair. Also involved in tRNA surveillance by mediating tandem CCA addition to generate a CCACCA at the 3' terminus of unstable tRNAs. While stable tRNAs receive only 3'-terminal CCA, unstable tRNAs are marked with CCACCA and rapidly degraded. The polypeptide is CCA-adding enzyme (Buchnera aphidicola subsp. Acyrthosiphon pisum (strain 5A)).